The sequence spans 147 residues: uncharacterized protein (147 aa).

This sequence belongs to the MG185/MG260 family.

This is an uncharacterized protein from Mycoplasma pneumoniae (strain ATCC 29342 / M129 / Subtype 1) (Mycoplasmoides pneumoniae).